Consider the following 232-residue polypeptide: MSEKDNQGHRERIREKFFNNGIDGFAEYEILELLLTYCIPRKDTKPIAKELLNKFKSLDNVFKASFDKLSTIDGLGKNSITFLKLLGELPSIIYKDELKNKKLIDKETLKISNKDILLKYLRNKIGYEEIEKFYVIYLSSSNEVIEFEENSVGTLDRSSVYPREIYKKVINLNAKSIILAHNHPSDNITPSKSDIELTNEIAKGLKNFGALLIEHIIITKNSYFSFLEEGLI.

In terms of domain architecture, MPN spans 110-232 (KISNKDILLK…YFSFLEEGLI (123 aa)). Zn(2+)-binding residues include histidine 181, histidine 183, and aspartate 194. The JAMM motif signature appears at 181–194 (HNHPSDNITPSKSD).

It belongs to the UPF0758 family.

This chain is UPF0758 protein FN0909, found in Fusobacterium nucleatum subsp. nucleatum (strain ATCC 25586 / DSM 15643 / BCRC 10681 / CIP 101130 / JCM 8532 / KCTC 2640 / LMG 13131 / VPI 4355).